A 507-amino-acid chain; its full sequence is Rho GTPase-activating protein 19 (507 aa).

In terms of domain architecture, Rho-GAP spans 112–305 (APLTEEGIAQ…FMIKHSQKLF (194 aa)). Disordered regions lie at residues 344-371 (FLKHSKRSRLGSSPSSSTSLQEQTQQHT), 400-419 (KNTPRTPVSDTQVPNGKKHV), and 483-507 (DLQIRKEASSKSKKSHHKSTQETSI). The span at 355–369 (SSPSSSTSLQEQTQQ) shows a compositional bias: low complexity. Polar residues predominate over residues 400–413 (KNTPRTPVSDTQVP). The segment covering 483 to 492 (DLQIRKEASS) has biased composition (basic and acidic residues).

In terms of biological role, GTPase activator for the Rho-type GTPases by converting them to an inactive GDP-bound state. The chain is Rho GTPase-activating protein 19 (arhgap19) from Xenopus laevis (African clawed frog).